Consider the following 360-residue polypeptide: Phosphoserine aminotransferase (360 aa).

Arginine 42 contributes to the L-glutamate binding site. Residues tryptophan 102, threonine 152, aspartate 171, and glutamine 194 each contribute to the pyridoxal 5'-phosphate site. Residue lysine 195 is modified to N6-(pyridoxal phosphate)lysine. Asparagine 237–threonine 238 is a binding site for pyridoxal 5'-phosphate.

The protein belongs to the class-V pyridoxal-phosphate-dependent aminotransferase family. SerC subfamily. In terms of assembly, homodimer. Pyridoxal 5'-phosphate is required as a cofactor.

Its subcellular location is the cytoplasm. It carries out the reaction O-phospho-L-serine + 2-oxoglutarate = 3-phosphooxypyruvate + L-glutamate. The catalysed reaction is 4-(phosphooxy)-L-threonine + 2-oxoglutarate = (R)-3-hydroxy-2-oxo-4-phosphooxybutanoate + L-glutamate. Its pathway is amino-acid biosynthesis; L-serine biosynthesis; L-serine from 3-phospho-D-glycerate: step 2/3. It functions in the pathway cofactor biosynthesis; pyridoxine 5'-phosphate biosynthesis; pyridoxine 5'-phosphate from D-erythrose 4-phosphate: step 3/5. In terms of biological role, catalyzes the reversible conversion of 3-phosphohydroxypyruvate to phosphoserine and of 3-hydroxy-2-oxo-4-phosphonooxybutanoate to phosphohydroxythreonine. The protein is Phosphoserine aminotransferase of Coxiella burnetii (strain CbuG_Q212) (Coxiella burnetii (strain Q212)).